We begin with the raw amino-acid sequence, 254 residues long: Major prion protein (254 aa).

Residues methionine 1 to cysteine 22 form the signal peptide. Residues lysine 23–serine 231 form an interaction with GRB2, ERI3 and SYN1 region. Residues arginine 25–threonine 107 form a disordered region. Repeat copies occupy residues proline 51 to glutamine 59, proline 60 to glutamine 67, proline 68 to glutamine 75, proline 76 to glutamine 83, and proline 84 to glutamine 91. The interval proline 51–glutamine 91 is 5 X 8 AA tandem repeats of P-H-G-G-G-W-G-Q. The span at glutamine 52–threonine 95 shows a compositional bias: gly residues. Histidine 61, glycine 62, glycine 63, histidine 69, glycine 70, glycine 71, histidine 77, glycine 78, glycine 79, histidine 85, glycine 86, and glycine 87 together coordinate Cu(2+). Cysteine 179 and cysteine 214 are disulfide-bonded. Asparagine 181 and asparagine 197 each carry an N-linked (GlcNAc...) asparagine glycan. Serine 231 is lipidated: GPI-anchor amidated serine. The propeptide at serine 232–glycine 254 is removed in mature form.

The protein belongs to the prion family. Monomer and homodimer. Has a tendency to aggregate into amyloid fibrils containing a cross-beta spine, formed by a steric zipper of superposed beta-strands. Soluble oligomers may represent an intermediate stage on the path to fibril formation. Copper binding may promote oligomerization. Interacts with GRB2, APP, ERI3/PRNPIP and SYN1. Mislocalized cytosolically exposed PrP interacts with MGRN1; this interaction alters MGRN1 subcellular location and causes lysosomal enlargement. Interacts with KIAA1191.

Its subcellular location is the cell membrane. The protein resides in the golgi apparatus. Its primary physiological function is unclear. Has cytoprotective activity against internal or environmental stresses. May play a role in neuronal development and synaptic plasticity. May be required for neuronal myelin sheath maintenance. May play a role in iron uptake and iron homeostasis. Soluble oligomers are toxic to cultured neuroblastoma cells and induce apoptosis (in vitro). Association with GPC1 (via its heparan sulfate chains) targets PRNP to lipid rafts. Also provides Cu(2+) or Zn(2+) for the ascorbate-mediated GPC1 deaminase degradation of its heparan sulfate side chains. The chain is Major prion protein (PRNP) from Sigmodon hispidus (Hispid cotton rat).